A 416-amino-acid chain; its full sequence is Calreticulin (416 aa).

The signal sequence occupies residues 1–17 (MLLSVPLLLGLLGLAAA). An N-domain region spans residues 18-197 (DPAIYFKEQF…NSQVESGSLE (180 aa)). Residue glutamine 26 coordinates Ca(2+). Lysine 48 is modified (N6-acetyllysine). Ca(2+) is bound by residues lysine 62 and lysine 64. Lysine 64 bears the N6-(2-hydroxyisobutyryl)lysine mark. Cysteine 105 and cysteine 137 are disulfide-bonded. An alpha-D-glucoside is bound by residues tyrosine 109, lysine 111, tyrosine 128, and aspartate 135. Lysine 159 is modified (N6-acetyllysine). The stretch at 191 to 202 (VESGSLEDDWDF) is one 1-1 repeat. A 4 X approximate repeats region spans residues 191 to 255 (VESGSLEDDW…DAKKPEDWDE (65 aa)). Positions 193 to 277 (SGSLEDDWDF…NPEYKGEWKP (85 aa)) are disordered. The P-domain stretch occupies residues 198–308 (DDWDFLPPKK…YSPDANIYAY (111 aa)). Over residues 207 to 251 (KIKDPDAAKPEDWDERAKIDDPTDSKPEDWDKPEHIPDPDAKKPE) the composition is skewed to basic and acidic residues. The residue at position 209 (lysine 209) is an N6-acetyllysine. A run of 6 repeats spans residues 210 to 221 (DPDAAKPEDWDE), 227 to 238 (DPTDSKPEDWDK), 244 to 255 (DPDAKKPEDWDE), 259 to 269 (GEWEPPVIQNP), 273 to 283 (GEWKPRQIDNP), and 287 to 297 (GTWIHPEIDNP). Residues 237–270 (DKPEHIPDPDAKKPEDWDEEMDGEWEPPVIQNPE) are interaction with PPIB. Acidic residues predominate over residues 252 to 261 (DWDEEMDGEW). Residues 259-297 (GEWEPPVIQNPEYKGEWKPRQIDNPDYKGTWIHPEIDNP) are 3 X approximate repeats. The interval 309 to 416 (DSFAVLGLDL…ESPGQAKDEL (108 aa)) is C-domain. Aspartate 317 contacts an alpha-D-glucoside. Residue aspartate 328 participates in Ca(2+) binding. The disordered stretch occupies residues 350–416 (TKAAEKQMKD…ESPGQAKDEL (67 aa)). The span at 352 to 379 (AAEKQMKDKQDEEQRLKEEEEDKKRKEE) shows a compositional bias: basic and acidic residues. The segment covering 380–408 (EEAEDKEDDDDRDEDEDEEDEKEEDEEES) has biased composition (acidic residues). The Prevents secretion from ER motif lies at 413 to 416 (KDEL).

It belongs to the calreticulin family. Monomer. Interacts with GABARAP, NR3C1, PDIA3/ERp57 and TRIM21. Interacts (via P-domain) with PDIA5. Interacts with PPIB. Interacts with SPACA9. Component of an EIF2 complex at least composed of CELF1/CUGBP1, CALR, CALR3, EIF2S1, EIF2S2, HSP90B1 and HSPA5. Interacts with CLCC1.

The protein resides in the endoplasmic reticulum lumen. The protein localises to the cytoplasm. It is found in the cytosol. It localises to the cytolytic granule. Its subcellular location is the secreted. The protein resides in the extracellular space. The protein localises to the extracellular matrix. It is found in the cell surface. It localises to the sarcoplasmic reticulum lumen. Its subcellular location is the cytoplasmic vesicle. The protein resides in the secretory vesicle. The protein localises to the cortical granule. In terms of biological role, calcium-binding chaperone that promotes folding, oligomeric assembly and quality control in the endoplasmic reticulum (ER) via the calreticulin/calnexin cycle. This lectin interacts transiently with almost all of the monoglucosylated glycoproteins that are synthesized in the ER. Interacts with the DNA-binding domain of NR3C1 and mediates its nuclear export. Involved in maternal gene expression regulation. May participate in oocyte maturation via the regulation of calcium homeostasis. Present in the cortical granules of non-activated oocytes, is exocytosed during the cortical reaction in response to oocyte activation and might participate in the block to polyspermy. The chain is Calreticulin (Calr) from Mus musculus (Mouse).